The primary structure comprises 596 residues: F-box/WD repeat-containing protein 8 (596 aa).

The residue at position 1 (methionine 1) is an N-acetylmethionine. A disordered region spans residues 21 to 95 (QVLRRRRRLE…PDRDAAEPEP (75 aa)). A compositionally biased stretch (basic and acidic residues) spans 29-43 (LEAGERRPRRPEAGA). The span at 44–64 (RGEPASGYLGLAQGLLEGAGR) shows a compositional bias: low complexity. Positions 71-91 (GRTDRKDVSSRSRSPPDRDAA) are enriched in basic and acidic residues. Phosphoserine occurs at positions 82 and 84. The F-box domain maps to 111–157 (PFFDVHLPYELAINIFQYLNRRELGLCAQVSKTWKVIAEDEVLWYRL). WD repeat units lie at residues 199 to 248 (AVSE…LESE), 257 to 297 (QPYV…FEHD), 298 to 338 (ARIQ…SEFE), 339 to 381 (VQKL…LHYV), 382 to 427 (YGQP…SKLG), 428 to 473 (NALG…SAHQ), 474 to 511 (LGVS…EVHS), and 512 to 559 (RHPV…AYEF).

As to quaternary structure, component of the Cul7-RING(FBXW8) complex consisting of CUL7, RBX1, SKP1 and FBXW8; within the complex interacts with CUL7 and SKP1. Interacts with GLMN isoform 1. Interacts with OBSL1, CUL1, CUL2, CCT6B, PFDN5, CCT2, CCT3, CCT6A, CCT7, VBP1, CCDC8, ARF1, TRIP13, PDCD5 and GORASP1. Interacts with MAP4K1/HPK1 (when autophosphorylated). Associated component of the 3M complex. Interacts with POUF51 (when phosphorylated on 'Ser-347'). Phosphorylation at Ser-84 by mTORC2 promotes FBXW8 stabilization, allowing its translocation to the cytosol in response to insulin. As to expression, expressed in placenta and embryonic brain (at protein level).

The protein localises to the cytoplasm. It is found in the perinuclear region. The protein resides in the golgi apparatus. It localises to the cytosol. It participates in protein modification; protein ubiquitination. Its function is as follows. Substrate-recognition component of the Cul7-RING(FBXW8) ubiquitin ligase complex, which mediates the ubiquitination and subsequent proteasomal degradation of target proteins. The Cul7-RING(FBXW8) complex mediates ubiquitination and consequent degradation of GORASP1, acting as a component of the ubiquitin ligase pathway that regulates Golgi morphogenesis and dendrite patterning in brain. Mediates ubiquitination and degradation of IRS1 in a mTOR-dependent manner: the Cul7-RING(FBXW8) complex recognizes and binds IRS1 previously phosphorylated by S6 kinase (RPS6KB1 or RPS6KB2). The Cul7-RING(FBXW8) complex also mediates ubiquitination of MAP4K1/HPK1: recognizes and binds autophosphorylated MAP4K1/HPK1, leading to its degradation, thereby affecting cell proliferation and differentiation. The Cul7-RING(FBXW8) complex also mediates ubiquitination of phosphorylated cyclin-D1 (CCND1). The Cul7-RING(FBXW8) complex is however not a major regulator of CCND1 stability during the G1/S transition. Associated component of the 3M complex, suggesting that it mediates some of 3M complex functions. The sequence is that of F-box/WD repeat-containing protein 8 (Fbxw8) from Rattus norvegicus (Rat).